An 867-amino-acid chain; its full sequence is MQDTYQPAQIEAAIQQQWANEERFKAVVNPQKEKFYCLSMFPYPSGKLHMGHVRNYTIGDVISRYQRMLGKNVLQPMGWDAFGMPAENAAMKNQVAPAQWTYQNIAEMKKQLQSLGFAIDWSREITTCRPDYYRWEQWLFTRLYQKGVIYRKLGAVNWDPVDQTVLANEQVIDGRGWRSGAIVEKREIPMYYFRITDYAEELLNDLEQLDGWPERVKMMQRNWIGKSRGMTIRFPIEPESQKGLSAENAQFLQIYTTRPDTIFGVTFLAVAAEHPLALAAAEDNPALRQFMTECKTGSVAEADLATMPKKGMATGRFVTHPLTGKRLPVWVGNYVLSGYGDAAVMGVPAHDERDFHFAHQYGLPIVQVIQTEKDLPAFNADSWQEWYGDKEEMHVIASDDCNGLNYDQAFEKLSEKLAALNLGEPKTQYRLRDWGISRQRYWGCPIPIIHHDDGEALADTLPVVLPEDKIPDGGGSVLAQSPDYYECRFQGKAARRETDTMDTFVESSWYQFRYMSPHYQKGMLDPEEVAYWQDVDQYIGGIEHAILHLLYARFFTKLLRDEGLVHTDEPFKKLLTQGMVLAGTWYREQEHGSKIWFNPADVQVKTDDKGRIIGGVLLSDGKPVQYGGMEKMSKSKNNGVDPQALIKTYGADTARLYTMFTAPPEASLEWSESGVEGAYRFLRRLWAYCYEFRHSIAKPSEVVPLNEKHQNIRREIHEQLRAARFDYERNQFNTVVSAGMKLFNCLNEIEPDYDALRREGVRILLLILSPIVPHITETLWQALDFSGVISDQALPEVDETALKQDNMTLVVQINGKRRGEISVATDAAQQNIIDCALADERFAPYLAGLTVQKTIYVPKKLVNIVAK.

Positions 42–52 (PYPSGKLHMGH) match the 'HIGH' region motif. The 'KMSKS' region motif lies at 631-635 (KMSKS). Position 634 (lysine 634) interacts with ATP.

The protein belongs to the class-I aminoacyl-tRNA synthetase family.

It localises to the cytoplasm. The enzyme catalyses tRNA(Leu) + L-leucine + ATP = L-leucyl-tRNA(Leu) + AMP + diphosphate. The chain is Leucine--tRNA ligase from Dichelobacter nodosus (strain VCS1703A).